A 416-amino-acid chain; its full sequence is MTSELALFGGTPVRTEPFPDGPRFRERDLERIREVLESGSLGGIPFPNRTHRAFAEQFCGRLGARHGVLVANGTVSLSVALRALGVHAGDEVITTGYTWMGTAASIVHINAVPVLVDIDPNTWCIDPAAVEAAITPRTRAIVPVHLANQIADLDALLEIARKHDLVVLEDCAHAHFAEWRGRCVGTHGDAGSFSFESSKIMTSGEGGFLVSGDETTHHRAMSLVNCGRKEEGYDSFEGRMLGWNNRATELQAAFLIGQVEQHDELHAQRKSNVELLTKGLTEIGGFTPVGDDDPRVTRRQYYEVLYRFDPEQWAGVHRDRVLEALLAEGVEFEGITFYPPLHRDSLFTVSAEDWPMIRDRYGDRMGPEDFHLPVSERAAYDESVWVHHSLLTGPATDVDQILEAVAKVRRNVDALR.

Lys199 bears the N6-(pyridoxal phosphate)lysine mark.

This sequence belongs to the DegT/DnrJ/EryC1 family. L-glutamine:2-deoxy-scyllo-inosose/scyllo-inosose aminotransferase subfamily. The cofactor is pyridoxal 5'-phosphate.

It catalyses the reaction 3-amino-2,3-dideoxy-scyllo-inosose + L-glutamine = 2-deoxystreptamine + 2-oxoglutaramate. The protein operates within metabolic intermediate biosynthesis; 2-deoxystreptamine biosynthesis; 2-deoxystreptamine from D-glucose 6-phosphate: step 4/4. Its pathway is antibiotic biosynthesis; tobramycin biosynthesis. In terms of biological role, catalyzes the transamination of 3-amino-2,3-dideoxy-scyllo-inosose (amino-DOI) into 2-deoxystreptamine (DOS). The polypeptide is Putative L-glutamine:3-amino-2,3-dideoxy-scyllo-inosose aminotransferase (tobS2) (Streptoalloteichus tenebrarius (strain ATCC 17920 / DSM 40477 / JCM 4838 / CBS 697.72 / NBRC 16177 / NCIMB 11028 / NRRL B-12390 / A12253. 1 / ISP 5477) (Streptomyces tenebrarius)).